A 725-amino-acid chain; its full sequence is Ribosomal RNA large subunit methyltransferase K/L (725 aa).

Positions 46 to 157 (VGYRLCLWSR…KGQAVLSLDL (112 aa)) constitute a THUMP domain.

This sequence belongs to the methyltransferase superfamily. RlmKL family.

It localises to the cytoplasm. The enzyme catalyses guanosine(2445) in 23S rRNA + S-adenosyl-L-methionine = N(2)-methylguanosine(2445) in 23S rRNA + S-adenosyl-L-homocysteine + H(+). The catalysed reaction is guanosine(2069) in 23S rRNA + S-adenosyl-L-methionine = N(2)-methylguanosine(2069) in 23S rRNA + S-adenosyl-L-homocysteine + H(+). Its function is as follows. Specifically methylates the guanine in position 2445 (m2G2445) and the guanine in position 2069 (m7G2069) of 23S rRNA. The polypeptide is Ribosomal RNA large subunit methyltransferase K/L (Stutzerimonas stutzeri (strain A1501) (Pseudomonas stutzeri)).